A 906-amino-acid polypeptide reads, in one-letter code: Inactive angiotensin-converting enzyme-related protein (906 aa).

Residues Met-1 to Thr-19 form the signal peptide. Residues Leu-28–Ile-95 are disordered. Over residues Pro-67–Pro-83 the composition is skewed to basic and acidic residues. Asn-159 is a glycosylation site (N-linked (GlcNAc...) asparagine). The region spanning Ile-175–Asp-765 is the Peptidase M2 domain. An intrachain disulfide couples Cys-289 to Cys-297. An N-linked (GlcNAc...) asparagine glycan is attached at Asn-653. Residues Val-862–Pro-882 are disordered. Residues Thr-863–Pro-882 are compositionally biased toward low complexity.

It belongs to the peptidase M2 family. Expressed in the hypodermis, in the vulva during organogenesis, and in the ray papillae of the male tail.

Functionally, inactive as a metallopeptidase, due to a lack of active site residues. Required for larval molting, male tail development, and formation of adult alae. Acts in the heterochronic pathway and plays a role in the developmental timing of postembryonic hypodermal seam cell division and adult alae production. Acts synergistically with apl-1 in let-7 regulated postembryonic cell division events. Might act downstream of the heterochronic protein lin-41. Negative regulator of lifespan, heat and oxidative stress response and age-related degenerative changes like reduced pharyngeal pumping and decreased body movements. Lifespan restriction is dependent on the forkhead-type transcription factor daf-16. The sequence is that of Inactive angiotensin-converting enzyme-related protein from Caenorhabditis elegans.